The chain runs to 595 residues: Merlin (595 aa).

Phosphoserine is present on Ser13. Positions 22–311 (FTVRIVTMDA…GNHDLFMRRR (290 aa)) constitute an FERM domain. Ser518 bears the Phosphoserine; by PAK mark.

Interacts with NHERF1, HGS and AGAP2. Interacts with LAYN. Interacts with SGSM3. Interacts (via FERM domain) with MPP1. Interacts with WWC1. Interacts with the CUL4A-RBX1-DDB1-VprBP/DCAF1 E3 ubiquitin-protein ligase complex. The unphosphorylated form interacts (via FERM domain) with VPRBP/DCAF1. Interacts (via FERM domain) with NOP53; the interaction is direct. Interacts with SCHIP1; the interaction is direct. In terms of processing, phosphorylation of Ser-518 inhibits nuclear localization by disrupting the intramolecular association of the FERM domain with the C-terminal tail. The dephosphorylation of Ser-518 favors the interaction with NOP53. Ubiquitinated by the CUL4A-RBX1-DDB1-DCAF1/VprBP E3 ubiquitin-protein ligase complex for ubiquitination and subsequent proteasome-dependent degradation. Widely expressed. Isoform 1 and isoform 3 are predominant. Isoform 4, isoform 5 and isoform 6 are expressed moderately. Isoform 8 is found at low frequency. Isoform 7, isoform 9 and isoform 10 are not expressed in adult tissues, with the exception of adult retina expressing isoform 10. Isoform 9 is faintly expressed in fetal brain, heart, lung, skeletal muscle and spleen. Fetal thymus expresses isoforms 1, 7, 9 and 10 at similar levels.

The protein resides in the cell projection. Its subcellular location is the filopodium membrane. The protein localises to the ruffle membrane. It is found in the nucleus. It localises to the cytoplasm. The protein resides in the perinuclear region. Its subcellular location is the cytoplasmic granule. The protein localises to the cytoskeleton. In terms of biological role, probable regulator of the Hippo/SWH (Sav/Wts/Hpo) signaling pathway, a signaling pathway that plays a pivotal role in tumor suppression by restricting proliferation and promoting apoptosis. Along with WWC1 can synergistically induce the phosphorylation of LATS1 and LATS2 and can probably function in the regulation of the Hippo/SWH (Sav/Wts/Hpo) signaling pathway. May act as a membrane stabilizing protein. May inhibit PI3 kinase by binding to AGAP2 and impairing its stimulating activity. Suppresses cell proliferation and tumorigenesis by inhibiting the CUL4A-RBX1-DDB1-VprBP/DCAF1 E3 ubiquitin-protein ligase complex. This Homo sapiens (Human) protein is Merlin (NF2).